The chain runs to 69 residues: Putative membrane protein insertion efficiency factor (69 aa).

This sequence belongs to the UPF0161 family.

Its subcellular location is the cell inner membrane. Functionally, could be involved in insertion of integral membrane proteins into the membrane. This Azoarcus sp. (strain BH72) protein is Putative membrane protein insertion efficiency factor.